The chain runs to 255 residues: MQRRPLVAGNWKMHGSRESVGQLLRALKHGCERLETAELAVFPPFVFLQQCEEALMRTQISWGAQDVSEFERGAYTGEVSAAMLRDFHCRYVIVGHSERRQRHGETNEQVAAKVRAALRCGIRPIICVGETEKQRNANQTLSVIKEQLAVVLQMNDNLASLEGMVVAYEPIWAIGTGKNATPSQAEEVHAALRDQLHRQDATLAESTRLLYGGSVKPDNAAALFEMPNIDGALVGGASLEAEQFLKIGQQCNQSF.

10–12 contributes to the substrate binding site; it reads NWK. His96 (electrophile) is an active-site residue. Glu169 acts as the Proton acceptor in catalysis. Residues Gly175, Ser214, and 235 to 236 contribute to the substrate site; that span reads GG.

Belongs to the triosephosphate isomerase family. Homodimer.

Its subcellular location is the cytoplasm. It catalyses the reaction D-glyceraldehyde 3-phosphate = dihydroxyacetone phosphate. The protein operates within carbohydrate biosynthesis; gluconeogenesis. It functions in the pathway carbohydrate degradation; glycolysis; D-glyceraldehyde 3-phosphate from glycerone phosphate: step 1/1. Functionally, involved in the gluconeogenesis. Catalyzes stereospecifically the conversion of dihydroxyacetone phosphate (DHAP) to D-glyceraldehyde-3-phosphate (G3P). This chain is Triosephosphate isomerase, found in Coxiella burnetii (strain Dugway 5J108-111).